A 293-amino-acid polypeptide reads, in one-letter code: Energy-coupling factor transporter ATP-binding protein EcfA2 (293 aa).

In terms of domain architecture, ABC transporter spans 3–246; the sequence is ITFQKVEHRY…ADELEKIGVD (244 aa). Residue 40-47 participates in ATP binding; it reads GHTGSGKS.

The protein belongs to the ABC transporter superfamily. Energy-coupling factor EcfA family. In terms of assembly, forms a stable energy-coupling factor (ECF) transporter complex composed of 2 membrane-embedded substrate-binding proteins (S component), 2 ATP-binding proteins (A component) and 2 transmembrane proteins (T component).

The protein resides in the cell membrane. Its function is as follows. ATP-binding (A) component of a common energy-coupling factor (ECF) ABC-transporter complex. Unlike classic ABC transporters this ECF transporter provides the energy necessary to transport a number of different substrates. The chain is Energy-coupling factor transporter ATP-binding protein EcfA2 from Bacillus anthracis.